The following is a 252-amino-acid chain: Thiazole synthase (252 aa).

Catalysis depends on Lys91, which acts as the Schiff-base intermediate with DXP. 1-deoxy-D-xylulose 5-phosphate contacts are provided by residues Gly152, Ala179–Gly180, and Asn201–Thr202.

The protein belongs to the ThiG family. In terms of assembly, homotetramer. Forms heterodimers with either ThiH or ThiS.

It is found in the cytoplasm. The catalysed reaction is [ThiS sulfur-carrier protein]-C-terminal-Gly-aminoethanethioate + 2-iminoacetate + 1-deoxy-D-xylulose 5-phosphate = [ThiS sulfur-carrier protein]-C-terminal Gly-Gly + 2-[(2R,5Z)-2-carboxy-4-methylthiazol-5(2H)-ylidene]ethyl phosphate + 2 H2O + H(+). Its pathway is cofactor biosynthesis; thiamine diphosphate biosynthesis. In terms of biological role, catalyzes the rearrangement of 1-deoxy-D-xylulose 5-phosphate (DXP) to produce the thiazole phosphate moiety of thiamine. Sulfur is provided by the thiocarboxylate moiety of the carrier protein ThiS. In vitro, sulfur can be provided by H(2)S. This is Thiazole synthase from Erwinia amylovora (Fire blight bacteria).